The sequence spans 822 residues: Nose resistant to fluoxetine protein 6 (822 aa).

An N-terminal signal peptide occupies residues 1–24 (MGNMRRLLIFAVLVILTVISNSKS). Residue N236 is glycosylated (N-linked (GlcNAc...) asparagine). The next 3 helical transmembrane spans lie at 306 to 326 (LAMF…FGTL), 617 to 637 (PYIR…LNAW), and 655 to 675 (IICW…LYWF).

This sequence belongs to the acyltransferase 3 family. As to expression, in L1 larvae through to adult, hyp3 and hyp5, the most anterior cells in the hypodermis, and in intestine. Other hypodermal cells show weaker expression.

It localises to the membrane. Functionally, plays a role in the uptake of a range of molecules including lipids and xenobiotic compounds from the intestine to surrounding tissues. Mediates transport of lipids from intestine to the reproductive tract. Required for efficient yolk transport into oocytes. Vital for embryonic development. This is Nose resistant to fluoxetine protein 6 (nrf-6) from Caenorhabditis elegans.